Consider the following 339-residue polypeptide: Uroporphyrinogen decarboxylase (339 aa).

Residues 21 to 25, aspartate 71, tyrosine 147, serine 202, and histidine 315 contribute to the substrate site; that span reads RQAGR.

The protein belongs to the uroporphyrinogen decarboxylase family. Homodimer.

Its subcellular location is the cytoplasm. The catalysed reaction is uroporphyrinogen III + 4 H(+) = coproporphyrinogen III + 4 CO2. Its pathway is porphyrin-containing compound metabolism; protoporphyrin-IX biosynthesis; coproporphyrinogen-III from 5-aminolevulinate: step 4/4. Functionally, catalyzes the decarboxylation of four acetate groups of uroporphyrinogen-III to yield coproporphyrinogen-III. This Helicobacter pylori (strain HPAG1) protein is Uroporphyrinogen decarboxylase.